The chain runs to 1240 residues: Neurofascin (1240 aa).

The N-terminal stretch at 1–24 is a signal peptide; the sequence is MARQQAPPWVHIALILFLLSLGGA. At 25–1110 the chain is on the extracellular side; it reads IEIPMDPSIQ…NQADIATQGW (1086 aa). 6 Ig-like C2-type domains span residues 41–137, 143–230, 244–332, 337–424, 430–517, and 521–603; these read PTIT…LQVS, PKEN…NPFT, PSFM…ISVR, PYWL…AFVS, PRML…VRLE, and PTRI…QDLA. Cystine bridges form between Cys63–Cys118, Cys162–Cys213, Cys268–Cys316, and Cys358–Cys408. Residue Asn305 is glycosylated (N-linked (GlcNAc...) asparagine). N-linked (GlcNAc...) asparagine glycans are attached at residues Asn409 and Asn446. Intrachain disulfides connect Cys452-Cys501 and Cys543-Cys592. Position 481 is a phosphotyrosine (Tyr481). N-linked (GlcNAc...) asparagine glycosylation occurs at Asn483. Residue Ser485 is modified to Phosphoserine. Fibronectin type-III domains lie at 630-725, 727-823, 827-923, and 1007-1099; these read RPRD…TSGA, PESN…SGED, APRR…PNEA, and APDE…TAYT. Residues 710-740 form a disordered region; sequence SSHPSLPSERYRTSGAPPESNPSDVKGEGTR. N-linked (GlcNAc...) asparagine glycosylation is found at Asn752, Asn778, Asn866, and Asn881. Positions 902–942 are disordered; it reads ARTQVGSGEAATEESPAPPNEATPTAAPPTLPPTTVGTTGL. Residues 907–916 show a composition bias toward low complexity; the sequence is GSGEAATEES. Residues 917–933 are compositionally biased toward pro residues; that stretch reads PAPPNEATPTAAPPTLP. Residues 1111–1131 traverse the membrane as a helical segment; that stretch reads FIGLMCAIALLVLILLIVCFI. The Cytoplasmic segment spans residues 1132–1240; the sequence is KRSRGGKYPV…SPVNAIYSLA (109 aa). Residues 1141 to 1240 form a disordered region; sequence VREKKDVPLG…SPVNAIYSLA (100 aa). Positions 1154–1165 are enriched in acidic residues; it reads PKEEDGSFDYSD. Ser1160, Ser1174, Ser1187, Ser1190, Ser1226, Ser1227, and Ser1231 each carry phosphoserine. Polar residues predominate over residues 1171–1184; that stretch reads LQGSQTSLDGTIKQ.

The protein belongs to the immunoglobulin superfamily. L1/neurofascin/NgCAM family. Horseshoe-shaped homodimer. Probable constituent of a NFASC/NRCAM/ankyrin-G complex. Associates with the sodium channel beta-1 (SCN1B) and beta-3 (SCN3B) subunits. Interacts with GLDN/gliomedin. Interacts with MYOC.

Its subcellular location is the cell membrane. Functionally, cell adhesion, ankyrin-binding protein which may be involved in neurite extension, axonal guidance, synaptogenesis, myelination and neuron-glial cell interactions. This is Neurofascin (Nfasc) from Mus musculus (Mouse).